A 190-amino-acid polypeptide reads, in one-letter code: Large ribosomal subunit protein uL6 (190 aa).

Belongs to the universal ribosomal protein uL6 family.

In Spodoptera frugiperda (Fall armyworm), this protein is Large ribosomal subunit protein uL6 (RpL9).